The primary structure comprises 311 residues: Acetyl-coenzyme A carboxylase carboxyl transferase subunit alpha (311 aa).

Residues 36 to 286 (ELKKEVERVY…VNYFLKSLEE (251 aa)) enclose the CoA carboxyltransferase C-terminal domain.

The protein belongs to the AccA family. In terms of assembly, acetyl-CoA carboxylase is a heterohexamer composed of biotin carboxyl carrier protein (AccB), biotin carboxylase (AccC) and two subunits each of ACCase subunit alpha (AccA) and ACCase subunit beta (AccD).

Its subcellular location is the cytoplasm. The catalysed reaction is N(6)-carboxybiotinyl-L-lysyl-[protein] + acetyl-CoA = N(6)-biotinyl-L-lysyl-[protein] + malonyl-CoA. It functions in the pathway lipid metabolism; malonyl-CoA biosynthesis; malonyl-CoA from acetyl-CoA: step 1/1. Component of the acetyl coenzyme A carboxylase (ACC) complex. First, biotin carboxylase catalyzes the carboxylation of biotin on its carrier protein (BCCP) and then the CO(2) group is transferred by the carboxyltransferase to acetyl-CoA to form malonyl-CoA. This Wolinella succinogenes (strain ATCC 29543 / DSM 1740 / CCUG 13145 / JCM 31913 / LMG 7466 / NCTC 11488 / FDC 602W) (Vibrio succinogenes) protein is Acetyl-coenzyme A carboxylase carboxyl transferase subunit alpha.